The primary structure comprises 212 residues: Pyridoxine/pyridoxamine 5'-phosphate oxidase (212 aa).

Residues 8-11 and lysine 66 each bind substrate; that span reads RRTY. FMN contacts are provided by residues 61 to 66, 76 to 77, arginine 82, lysine 83, and glutamine 105; these read RIVLLK and FT. Positions 123, 127, and 131 each coordinate substrate. FMN is bound by residues 140–141 and tryptophan 184; that span reads QS. 190–192 is a substrate binding site; that stretch reads RLH. An FMN-binding site is contributed by arginine 194.

This sequence belongs to the pyridoxamine 5'-phosphate oxidase family. As to quaternary structure, homodimer. The cofactor is FMN.

It catalyses the reaction pyridoxamine 5'-phosphate + O2 + H2O = pyridoxal 5'-phosphate + H2O2 + NH4(+). The enzyme catalyses pyridoxine 5'-phosphate + O2 = pyridoxal 5'-phosphate + H2O2. Its pathway is cofactor metabolism; pyridoxal 5'-phosphate salvage; pyridoxal 5'-phosphate from pyridoxamine 5'-phosphate: step 1/1. It participates in cofactor metabolism; pyridoxal 5'-phosphate salvage; pyridoxal 5'-phosphate from pyridoxine 5'-phosphate: step 1/1. Catalyzes the oxidation of either pyridoxine 5'-phosphate (PNP) or pyridoxamine 5'-phosphate (PMP) into pyridoxal 5'-phosphate (PLP). This is Pyridoxine/pyridoxamine 5'-phosphate oxidase from Cupriavidus taiwanensis (strain DSM 17343 / BCRC 17206 / CCUG 44338 / CIP 107171 / LMG 19424 / R1) (Ralstonia taiwanensis (strain LMG 19424)).